The following is a 193-amino-acid chain: Ion-translocating oxidoreductase complex subunit A (193 aa).

6 helical membrane passes run 5-25 (FFFI…FLGL), 47-67 (FVVV…LLPF), 72-92 (LRII…EIIL), 102-122 (ILGI…IPLF), 134-154 (ILYA…FSSI), and 171-191 (PIVL…KGLV).

This sequence belongs to the NqrDE/RnfAE family. The complex is composed of six subunits: RnfA, RnfB, RnfC, RnfD, RnfE and RnfG.

The protein localises to the cell inner membrane. Functionally, part of a membrane-bound complex that couples electron transfer with translocation of ions across the membrane. The sequence is that of Ion-translocating oxidoreductase complex subunit A from Buchnera aphidicola subsp. Schizaphis graminum (strain Sg).